The following is a 450-amino-acid chain: Tubulin alpha-5 chain (450 aa).

GTP contacts are provided by glutamine 11, glutamate 71, glycine 144, threonine 145, threonine 179, asparagine 206, and asparagine 228. Residue glutamate 71 coordinates Mg(2+). Residue glutamate 254 is part of the active site. At threonine 349 the chain carries Phosphothreonine. A disordered region spans residues 429–450 (EKDYEEVGAEGGDDEEDEGEDY). Residues 431 to 450 (DYEEVGAEGGDDEEDEGEDY) are compositionally biased toward acidic residues.

The protein belongs to the tubulin family. Dimer of alpha and beta chains. A typical microtubule is a hollow water-filled tube with an outer diameter of 25 nm and an inner diameter of 15 nM. Alpha-beta heterodimers associate head-to-tail to form protofilaments running lengthwise along the microtubule wall with the beta-tubulin subunit facing the microtubule plus end conferring a structural polarity. Microtubules usually have 13 protofilaments but different protofilament numbers can be found in some organisms and specialized cells. The cofactor is Mg(2+). Undergoes a tyrosination/detyrosination cycle, the cyclic removal and re-addition of a C-terminal tyrosine residue by the enzymes tubulin tyrosine carboxypeptidase (TTCP) and tubulin tyrosine ligase (TTL), respectively.

The protein localises to the cytoplasm. It localises to the cytoskeleton. It carries out the reaction GTP + H2O = GDP + phosphate + H(+). In terms of biological role, tubulin is the major constituent of microtubules, a cylinder consisting of laterally associated linear protofilaments composed of alpha- and beta-tubulin heterodimers. Microtubules grow by the addition of GTP-tubulin dimers to the microtubule end, where a stabilizing cap forms. Below the cap, tubulin dimers are in GDP-bound state, owing to GTPase activity of alpha-tubulin. This Arabidopsis thaliana (Mouse-ear cress) protein is Tubulin alpha-5 chain (TUBA5).